Reading from the N-terminus, the 586-residue chain is Arginine--tRNA ligase (586 aa).

Residues 131-141 (ANPTGPLHVGH) carry the 'HIGH' region motif.

The protein belongs to the class-I aminoacyl-tRNA synthetase family. Monomer.

The protein resides in the cytoplasm. It carries out the reaction tRNA(Arg) + L-arginine + ATP = L-arginyl-tRNA(Arg) + AMP + diphosphate. In Nitrosomonas europaea (strain ATCC 19718 / CIP 103999 / KCTC 2705 / NBRC 14298), this protein is Arginine--tRNA ligase.